Consider the following 388-residue polypeptide: Translation initiation factor eIF2B subunit beta (388 aa).

Residues 109–133 (DDFETTTSNNNNNNNNNNINSSSNI) are disordered. The segment covering 116 to 133 (SNNNNNNNNNNINSSSNI) has biased composition (low complexity).

The protein belongs to the eIF-2B alpha/beta/delta subunits family. As to quaternary structure, component of the translation initiation factor 2B (eIF2B) complex which is a heterodecamer of two sets of five different subunits: alpha, beta, gamma, delta and epsilon. Subunits alpha, beta and delta comprise a regulatory subcomplex and subunits epsilon and gamma comprise a catalytic subcomplex. Within the complex, the hexameric regulatory complex resides at the center, with the two heterodimeric catalytic subcomplexes bound on opposite sides.

The protein resides in the cytoplasm. It is found in the cytosol. Acts as a component of the translation initiation factor 2B (eIF2B) complex, which catalyzes the exchange of GDP for GTP on eukaryotic initiation factor 2 (eIF2) gamma subunit. Its guanine nucleotide exchange factor activity is repressed when bound to eIF2 complex phosphorylated on the alpha subunit, thereby limiting the amount of methionyl-initiator methionine tRNA available to the ribosome and consequently global translation is repressed. The sequence is that of Translation initiation factor eIF2B subunit beta (eif2b2) from Dictyostelium discoideum (Social amoeba).